We begin with the raw amino-acid sequence, 340 residues long: DnaJ homolog subfamily B member 1 (340 aa).

The region spanning 2-70 (GKDYYQTLGL…REIFDRYGEE (69 aa)) is the J domain. A disordered region spans residues 68-90 (GEEGLKGSGPSGGSSGGTNGTSF). Positions 73–86 (KGSGPSGGSSGGTN) are enriched in gly residues. Thr307 carries the phosphothreonine modification.

In terms of assembly, interacts with DNAJC3. Interacts with HSF1 (via transactivation domain); this interaction results in the inhibition of heat shock- and HSF1-induced transcriptional activity during the attenuation and recovery phase period of the heat shock response. Interacts with BAG3.

Its subcellular location is the cytoplasm. The protein resides in the nucleus. The protein localises to the nucleolus. Its function is as follows. Interacts with HSP70 and can stimulate its ATPase activity. Stimulates the association between HSC70 and HIP. Negatively regulates heat shock-induced HSF1 transcriptional activity during the attenuation and recovery phase period of the heat shock response. Stimulates ATP hydrolysis and the folding of unfolded proteins mediated by HSPA1A/B (in vitro). The chain is DnaJ homolog subfamily B member 1 (DNAJB1) from Bos taurus (Bovine).